Consider the following 199-residue polypeptide: Recombination protein RecR (199 aa).

Residues 58–73 (CKKCFNLTSEDECEIC) form a C4-type zinc finger. The region spanning 81–175 (KLICVVSETK…KVTRIAYGLP (95 aa)) is the Toprim domain.

This sequence belongs to the RecR family.

Functionally, may play a role in DNA repair. It seems to be involved in an RecBC-independent recombinational process of DNA repair. It may act with RecF and RecO. The protein is Recombination protein RecR of Prochlorococcus marinus (strain AS9601).